The chain runs to 968 residues: RNA polymerase-associated protein RapA (968 aa).

Positions 164–334 (DVGRRHAPRV…FARLRLLDPN (171 aa)) constitute a Helicase ATP-binding domain. An ATP-binding site is contributed by 177–184 (DEVGLGKT). Positions 280–283 (DEAH) match the DEAH box motif. The region spanning 490–685 (RVEWLMGYLT…ALKAQLEQGR (196 aa)) is the Helicase C-terminal domain.

The protein belongs to the SNF2/RAD54 helicase family. RapA subfamily. As to quaternary structure, interacts with the RNAP. Has a higher affinity for the core RNAP than for the holoenzyme. Its ATPase activity is stimulated by binding to RNAP.

In terms of biological role, transcription regulator that activates transcription by stimulating RNA polymerase (RNAP) recycling in case of stress conditions such as supercoiled DNA or high salt concentrations. Probably acts by releasing the RNAP, when it is trapped or immobilized on tightly supercoiled DNA. Does not activate transcription on linear DNA. Probably not involved in DNA repair. The sequence is that of RNA polymerase-associated protein RapA from Salmonella paratyphi C (strain RKS4594).